A 197-amino-acid chain; its full sequence is Ribosome maturation factor RimM (197 aa).

The PRC barrel domain occupies 92-164 (DEGWYEHELV…YILVTPPPGL (73 aa)). The tract at residues 167 to 197 (INVEDSGETSDAGESGPGEAEPGKAEAGDNA) is disordered. Positions 176–186 (SDAGESGPGEA) are enriched in low complexity. Basic and acidic residues predominate over residues 187–197 (EPGKAEAGDNA).

Belongs to the RimM family. Binds ribosomal protein uS19.

Its subcellular location is the cytoplasm. An accessory protein needed during the final step in the assembly of 30S ribosomal subunit, possibly for assembly of the head region. Essential for efficient processing of 16S rRNA. May be needed both before and after RbfA during the maturation of 16S rRNA. It has affinity for free ribosomal 30S subunits but not for 70S ribosomes. This chain is Ribosome maturation factor RimM, found in Arthrobacter sp. (strain FB24).